A 57-amino-acid polypeptide reads, in one-letter code: Insulin (57 aa).

Intrachain disulfides connect Cys12/Cys43, Cys24/Cys56, and Cys42/Cys47.

This sequence belongs to the insulin family. Heterodimer of a B chain and an A chain linked by two disulfide bonds.

Its subcellular location is the secreted. In terms of biological role, insulin decreases blood glucose concentration. It increases cell permeability to monosaccharides, amino acids and fatty acids. It accelerates glycolysis, the pentose phosphate cycle, and glycogen synthesis in liver. This is Insulin (ins) from Lampetra fluviatilis (European river lamprey).